Consider the following 249-residue polypeptide: NAD kinase (249 aa).

The active-site Proton acceptor is Asp45. NAD(+) contacts are provided by residues 45-46 (DG), Arg50, 110-111 (NE), Asp138, and 149-154 (SGWGMS).

This sequence belongs to the NAD kinase family. It depends on a divalent metal cation as a cofactor.

Its subcellular location is the cytoplasm. The enzyme catalyses NAD(+) + ATP = ADP + NADP(+) + H(+). In terms of biological role, involved in the regulation of the intracellular balance of NAD and NADP, and is a key enzyme in the biosynthesis of NADP. Catalyzes specifically the phosphorylation on 2'-hydroxyl of the adenosine moiety of NAD to yield NADP. This Saccharolobus solfataricus (strain ATCC 35092 / DSM 1617 / JCM 11322 / P2) (Sulfolobus solfataricus) protein is NAD kinase.